The chain runs to 572 residues: MANTPHGGVLKDLLSRDQPIRGELLKESETLASILLSERQLCDLELILSGGFSPLEGFMNEKDYNGVVNDLRLADGALFSMPITLDVSQEDIDELKLKAGGRYTLRDFRDDSPLAIITVDDIYRPDKAVEAKKVFRGDPEHPAVKYLYNTAKEFYVGGKIQAINKLNHYDYVGLRYTPAELRQEFGKLGWNKVVAFQTRNPMHRAHRELTVRAARSRQANVLIHPVVGLTKPGDIDHFTRVRVYQALLPRYPNGMALLGLLPLAMRMGGDREAMWHAIIRKNYGATHFIVGRDHAGPGKNSKGEEFYGPYDAQKLVEKYKDELGIEVVPFQMMTYLPDSDEYMPKDEVPEGTKTLDISGTELRKRLKFGLPIPEWFSYPEVVKVLRESHPPRAKQGFTIFLTGHYNSGKDAIARALQVSLNQQAGRTTTLLLGETVRSELSAELGFSREDRHKNVQRIAFVAAELTRAGSAVIAAPIAPHEAGRKEARETVEQGGNFFLVHVNTPLEYCEATDRKGRFAAAKRGEIKGFTGVDDEYEVPSNADLVVDASQTQVRTIVHQIILLLESQGFFGN.

The interval 1–169 (MANTPHGGVL…IQAINKLNHY (169 aa)) is N-terminal. The segment at 170 to 394 (DYVGLRYTPA…LRESHPPRAK (225 aa)) is catalytic. Q197 provides a ligand contact to sulfate. Residues 197–200 (QTRN) and 291–294 (GRDH) each bind ATP. Catalysis depends on residues T198, R199, and N200. R199 provides a ligand contact to sulfate. A295 contributes to the sulfate binding site. Position 333 (M333) interacts with ATP. The interval 395 to 572 (QGFTIFLTGH…LLESQGFFGN (178 aa)) is allosteric regulation domain; adenylyl-sulfate kinase-like. Residues 434–437 (ETVR), R451, 477–478 (IA), and K515 each bind 3'-phosphoadenylyl sulfate.

The protein in the N-terminal section; belongs to the sulfate adenylyltransferase family. It in the C-terminal section; belongs to the APS kinase family. In terms of assembly, homohexamer. Dimer of trimers.

The protein localises to the cytoplasm. It catalyses the reaction sulfate + ATP + H(+) = adenosine 5'-phosphosulfate + diphosphate. The protein operates within sulfur metabolism; hydrogen sulfide biosynthesis; sulfite from sulfate: step 1/3. Its activity is regulated as follows. Allosterically inhibited by 3'-phosphoadenosine 5'-phosphosulfate (PAPS). In terms of biological role, catalyzes the first intracellular reaction of sulfate assimilation, forming adenosine-5'-phosphosulfate (APS) from inorganic sulfate and ATP. Plays an important role in sulfate activation as a component of the biosynthesis pathway of sulfur-containing amino acids. The sequence is that of Sulfate adenylyltransferase from Yarrowia lipolytica (strain CLIB 122 / E 150) (Yeast).